The chain runs to 355 residues: Green-sensitive opsin (355 aa).

Over 1–36 the chain is Extracellular; it reads MNGTEGINFYVPMSNKTGVVRSPFEYPQYYLAEPWK. 2 N-linked (GlcNAc...) asparagine glycosylation sites follow: asparagine 2 and asparagine 15. A helical membrane pass occupies residues 37–61; the sequence is YRLVCCYIFFLISTGLPINLLTLLV. The Cytoplasmic segment spans residues 62–73; the sequence is TFKHKKLRQPLN. The helical transmembrane segment at 74 to 99 threads the bilayer; the sequence is YILVNLAVADLFMACFGFTVTFYTAW. Topologically, residues 100–113 are extracellular; the sequence is NGYFVFGPVGCAVE. Cysteine 110 and cysteine 187 are joined by a disulfide. Residues 114–133 traverse the membrane as a helical segment; the sequence is GFFATLGGQVALWSLVVLAI. Residues 134–152 lie on the Cytoplasmic side of the membrane; sequence ERYIVVCKPMGNFRFSATH. The helical transmembrane segment at 153–176 threads the bilayer; it reads AMMGIAFTWVMAFSCAAPPLFGWS. The Extracellular segment spans residues 177 to 202; the sequence is RYMPEGMQCSCGPDYYTHNPDYHNES. Residues 203–230 traverse the membrane as a helical segment; that stretch reads YVLYMFVIHFIIPVVVIFFSYGRLICKV. Over 231 to 252 the chain is Cytoplasmic; that stretch reads REAAAQQQESATTQKAEKEVTR. The chain crosses the membrane as a helical span at residues 253–276; it reads MVILMVLGFMLAWTPYAVVAFWIF. The Extracellular segment spans residues 277–284; sequence TNKGADFT. The chain crosses the membrane as a helical span at residues 285–309; that stretch reads ATLMAVPAFFSKSSSLYNPIIYVLM. Residue lysine 296 is modified to N6-(retinylidene)lysine. Residues 310–355 lie on the Cytoplasmic side of the membrane; sequence NKQFRNCMITTICCGKNPFGDEDVSSTVSQSKTEVSSVSSSQVSPA.

Belongs to the G-protein coupled receptor 1 family. Opsin subfamily. In terms of processing, phosphorylated on some or all of the serine and threonine residues present in the C-terminal region. In terms of tissue distribution, the color pigments are found in the cone photoreceptor cells.

The protein localises to the membrane. Visual pigments are the light-absorbing molecules that mediate vision. They consist of an apoprotein, opsin, covalently linked to cis-retinal. In Gallus gallus (Chicken), this protein is Green-sensitive opsin (PRA1).